Consider the following 245-residue polypeptide: Probable transcriptional regulatory protein Aflv_0709 (245 aa).

Residues 1–14 (MAGHSKWKNIQRRK) show a composition bias toward basic residues. Positions 1–21 (MAGHSKWKNIQRRKNAQDAKR) are disordered.

This sequence belongs to the TACO1 family.

The protein resides in the cytoplasm. The chain is Probable transcriptional regulatory protein Aflv_0709 from Anoxybacillus flavithermus (strain DSM 21510 / WK1).